We begin with the raw amino-acid sequence, 430 residues long: Transcription factor PIF4 (430 aa).

Disordered stretches follow at residues 42 to 71 (QTHREQTQTQKQDHHEEALRSSTFLEDQET), 97 to 136 (MDPLQRPTSETVKPKSSPEPPQVMVKPKACPDPPPQVMPP), 160 to 183 (TVGPSHCGSNPSQNDLDVSMSHDR), 223 to 266 (DRKR…NLSE), and 405 to 430 (SSPAGQQSQQPSSVPTKTTDGSRLDH). Over residues 43–60 (THREQTQTQKQDHHEEAL) the composition is skewed to basic and acidic residues. Positions 61–71 (RSSTFLEDQET) are enriched in polar residues. A compositionally biased stretch (pro residues) spans 126–136 (CPDPPPQVMPP). Polar residues predominate over residues 160 to 175 (TVGPSHCGSNPSQNDL). Residues 244–253 (NKSNQRSGSN) are compositionally biased toward low complexity. The span at 257–266 (RAAEVHNLSE) shows a compositional bias: basic and acidic residues. One can recognise a bHLH domain in the interval 257–306 (RAAEVHNLSERRRRDRINERMKALQELIPHCSKTDKASILDEAIDYLKSL). Residues 405 to 419 (SSPAGQQSQQPSSVP) show a composition bias toward low complexity.

Belongs to the bHLH protein family. As to quaternary structure, interacts preferentially with the Pfr form of phytochrome B (phyB). Binds DNA as a homodimer, but once bound to DNA, loses its capacity to interact with phyB. Interacts with APRR1/TOC1 and PIF3. Binds to RGL2 and RGA. Forms non-functional heterodimer with HFR1. Interacts with PHYB, CRY1 and CRY2 in the nucleus in response to low blue light (LBL). Interacts with FYPP1 and FYPP3. Associates to PTAC12/HMR/PAP5, which acts as a transcriptional coactivator to trigger the thermoresponsive growth-relevant genes and promote warm-temperature-dependent PIF4 accumulation. Interacts with MED14. Mainly expressed in leaves, stems and seedlings, and, to a lower extent, in fruits, flowers and roots.

The protein localises to the nucleus. Its function is as follows. Transcription factor acting negatively in the phytochrome B signaling pathway. May regulate the expression of a subset of genes involved in cell expansion by binding to the G-box motif. Activated by CRY1 and CRY2 in response to low blue light (LBL) by direct binding at chromatin on E-box variant 5'-CA[CT]GTG-3' to stimulate specific gene expression to adapt global physiology (e.g. hypocotyl elongation in low blue light). Element of a PIF4/HMR/MED14-dependent thermoresponsive process; collaboratively with its transcriptional coactivator PTAC12/HMR/PAP5, involved in the regulation of thermoresponsive growth-relevant genes (e.g. mainly involved in biosynthesis and signaling of the phytohormone auxin) leading to daytime warm temperature elicitation of MED14-dependent thermomorphogenesis (e.g. hypocotyl elongation). The polypeptide is Transcription factor PIF4 (Arabidopsis thaliana (Mouse-ear cress)).